We begin with the raw amino-acid sequence, 142 residues long: Large ribosomal subunit protein uL11 (142 aa).

Belongs to the universal ribosomal protein uL11 family. As to quaternary structure, part of the ribosomal stalk of the 50S ribosomal subunit. Interacts with L10 and the large rRNA to form the base of the stalk. L10 forms an elongated spine to which L12 dimers bind in a sequential fashion forming a multimeric L10(L12)X complex. In terms of processing, one or more lysine residues are methylated.

Its function is as follows. Forms part of the ribosomal stalk which helps the ribosome interact with GTP-bound translation factors. The polypeptide is Large ribosomal subunit protein uL11 (Nocardioides sp. (strain ATCC BAA-499 / JS614)).